The chain runs to 329 residues: Dolichyl-diphosphooligosaccharide--protein glycosyltransferase subunit MAGT1 (329 aa).

An N-terminal signal peptide occupies residues 1 to 23; the sequence is MAGLKGLLFGGILFAMCGGLSEG. Topologically, residues 24–178 are extracellular; it reads QKKKEMVLSD…DVNIRVIRPP (155 aa). One can recognise a Thioredoxin domain in the interval 41–169; that stretch reads WASKRPVIRM…LARWVADRTD (129 aa). A glycan (N-linked (GlcNAc...) asparagine) is linked at Asn65. Residues Cys81 and Cys84 are joined by a disulfide bond. A helical membrane pass occupies residues 179–199; sequence NYAGPLMLGLLLAVIGGLVYL. Over 200–212 the chain is Cytoplasmic; it reads RRSNLDFLNNKTG. The chain crosses the membrane as a helical span at residues 213-233; that stretch reads WALAALCFVLAMTSGQMWNHI. Residues 234–258 are Extracellular-facing; the sequence is RGPPYAHKNPHTNQVNYIHGSSQAQ. A helical membrane pass occupies residues 259–279; the sequence is FVAETHIVLLFNGAVTLGMVL. The Cytoplasmic segment spans residues 280–294; it reads LHEAATSDLDVGKRK. A helical transmembrane segment spans residues 295–315; that stretch reads IMCIAGITLVVIFFSWLLSVF. The Extracellular portion of the chain corresponds to 316-329; the sequence is RSKYHGYPYSFLMT.

The protein belongs to the OST3/OST6 family. In terms of assembly, accessory component of the STT3B-containing form of the oligosaccharyltransferase (OST) complex.

Its subcellular location is the cell membrane. It localises to the endoplasmic reticulum. The protein localises to the endoplasmic reticulum membrane. Its pathway is protein modification; protein glycosylation. Its function is as follows. Accessory component of the STT3B-containing form of the N-oligosaccharyl transferase (OST) complex which catalyzes the transfer of a high mannose oligosaccharide from a lipid-linked oligosaccharide donor to an asparagine residue within an Asn-X-Ser/Thr consensus motif in nascent polypeptide chains. May be involved in substrate-specific N-glycosylation involving acceptor sites that are near cysteine residues. Could indirectly play a role in Mg(2+) transport in epithelial cells. This chain is Dolichyl-diphosphooligosaccharide--protein glycosyltransferase subunit MAGT1, found in Xenopus laevis (African clawed frog).